The sequence spans 436 residues: Tol-Pal system protein TolB (436 aa).

The first 28 residues, 1–28 (MRSFLKPLLTIAAMALGMTAVIPMPAWA), serve as a signal peptide directing secretion.

This sequence belongs to the TolB family. As to quaternary structure, the Tol-Pal system is composed of five core proteins: the inner membrane proteins TolA, TolQ and TolR, the periplasmic protein TolB and the outer membrane protein Pal. They form a network linking the inner and outer membranes and the peptidoglycan layer.

The protein resides in the periplasm. Functionally, part of the Tol-Pal system, which plays a role in outer membrane invagination during cell division and is important for maintaining outer membrane integrity. This Mesorhizobium japonicum (strain LMG 29417 / CECT 9101 / MAFF 303099) (Mesorhizobium loti (strain MAFF 303099)) protein is Tol-Pal system protein TolB.